We begin with the raw amino-acid sequence, 732 residues long: MSKQTFSTTFAGKPLVVEVGQVAKQANGATVVRYGESTVLTAAVMSKKMATGDFFPLQVNYEEKMYAAGKFPGGFMKREGRPSTDATLTARLIDRPIRPMFAEGFRNEIQVINTVLSYDENASAPMAAMFGSSLALSISDIPFNGPIAGVQVGYIDGEFIINPDKAQMEASLLELTVAGSKEAINMVESGAKELSEDIMLEALLKGHQAIQELIAFQEEIVAAVGKEKAEVELLQVDADLQAEIVAKYNADLQKAVQVEEKKAREAATEAVKETVKAEYEAKFAEDENLATIMRDVAEILEQMEHAEVRRLITEDKVRPDGRKVDEIRPLDAQIDFLPKVHGSGLFTRGQTQALSVLTLAPMGDTQIIDGLDDEYKKRFLHHYNFPQYSVGETGRYGAAGRREIGHGALGERALEQVLPSLEEFPYAIRLVAEVLESNGSSSQASICAGTLALMAGGVPIKAPVAGIAMGLISDGTNYTVLTDIQGLEDHFGDMDFKVAGTRDGITALQMDIKIEGITPQILEEALAQAKKARFEILDLIETTIPAPRPELAPTAPKIDTIQIDVDKIKIVIGKGGETIDKIIAETGVKIDIDEEGLVQIFSSDQAAIDRTKEIITSLVREAKVGEVYHAKVVRIEKFGAFVNLFDKTDALVHISEIAWTRTANVSDVLEVGEEVDVKVIKVDDKGRVDASMKALIPRPPKPEKKEEKASEAKEASNDQASKSQSETASEEK.

The Mg(2+) site is built by Asp-489 and Asp-495. In terms of domain architecture, KH spans 556 to 615 (PKIDTIQIDVDKIKIVIGKGGETIDKIIAETGVKIDIDEEGLVQIFSSDQAAIDRTKEII). Residues 625–693 (GEVYHAKVVR…DKGRVDASMK (69 aa)) form the S1 motif domain. The segment at 691–732 (SMKALIPRPPKPEKKEEKASEAKEASNDQASKSQSETASEEK) is disordered. A compositionally biased stretch (basic and acidic residues) spans 700-716 (PKPEKKEEKASEAKEAS). Residues 717–732 (NDQASKSQSETASEEK) show a composition bias toward polar residues.

The protein belongs to the polyribonucleotide nucleotidyltransferase family. The cofactor is Mg(2+).

It localises to the cytoplasm. It carries out the reaction RNA(n+1) + phosphate = RNA(n) + a ribonucleoside 5'-diphosphate. Functionally, involved in mRNA degradation. Catalyzes the phosphorolysis of single-stranded polyribonucleotides processively in the 3'- to 5'-direction. The protein is Polyribonucleotide nucleotidyltransferase of Streptococcus uberis (strain ATCC BAA-854 / 0140J).